A 227-amino-acid polypeptide reads, in one-letter code: Ubiquitin domain-containing protein 1 (227 aa).

The segment at 1 to 42 (MGNCVGRQRRERPAAPGHPRKRAGRNEPLKKERLKWKSDYPM) is disordered. A compositionally biased stretch (basic and acidic residues) spans 24-38 (GRNEPLKKERLKWKS). The Ubiquitin-like domain occupies 149 to 224 (FPLKVRLSTG…IQVIINQPPP (76 aa)).

Interacts with UBTD1.

May be involved in the regulation of cellular senescence through a positive feedback loop with TP53. Is a TP53 downstream target gene that increases the stability of TP53 protein by promoting the ubiquitination and degradation of MDM2. The polypeptide is Ubiquitin domain-containing protein 1 (Ubtd1) (Mus musculus (Mouse)).